The primary structure comprises 121 residues: Large ribosomal subunit protein bL19 (121 aa).

It belongs to the bacterial ribosomal protein bL19 family.

In terms of biological role, this protein is located at the 30S-50S ribosomal subunit interface and may play a role in the structure and function of the aminoacyl-tRNA binding site. This Borreliella burgdorferi (strain ZS7) (Borrelia burgdorferi) protein is Large ribosomal subunit protein bL19.